The following is a 309-amino-acid chain: HPr kinase/phosphorylase (309 aa).

Residues H138 and K159 contribute to the active site. Residue 153 to 160 (GQSGVGKS) participates in ATP binding. S160 contacts Mg(2+). D177 (proton acceptor; for phosphorylation activity. Proton donor; for dephosphorylation activity) is an active-site residue. The segment at 201 to 210 (LEIRGLGIIN) is important for the catalytic mechanism of both phosphorylation and dephosphorylation. A Mg(2+)-binding site is contributed by E202. R243 is a catalytic residue. The interval 264 to 269 (PVRPGR) is important for the catalytic mechanism of dephosphorylation.

The protein belongs to the HPrK/P family. Homohexamer. The cofactor is Mg(2+).

The catalysed reaction is [HPr protein]-L-serine + ATP = [HPr protein]-O-phospho-L-serine + ADP + H(+). It carries out the reaction [HPr protein]-O-phospho-L-serine + phosphate + H(+) = [HPr protein]-L-serine + diphosphate. Functionally, catalyzes the ATP- as well as the pyrophosphate-dependent phosphorylation of a specific serine residue in HPr, a phosphocarrier protein of the phosphoenolpyruvate-dependent sugar phosphotransferase system (PTS). HprK/P also catalyzes the pyrophosphate-producing, inorganic phosphate-dependent dephosphorylation (phosphorolysis) of seryl-phosphorylated HPr (P-Ser-HPr). The two antagonistic activities of HprK/P are regulated by several intracellular metabolites, which change their concentration in response to the absence or presence of rapidly metabolisable carbon sources (glucose, fructose, etc.) in the growth medium. Also phosphorylates/dephosphorylates the HPr-like catabolite repression protein crh on a specific serine residue. Therefore, by controlling the phosphorylation state of HPr and crh, HPrK/P is a sensor enzyme that plays a major role in the regulation of carbon metabolism and sugar transport: it mediates carbon catabolite repression (CCR), and regulates PTS-catalyzed carbohydrate uptake and inducer exclusion. The chain is HPr kinase/phosphorylase from Bacillus anthracis (strain A0248).